The chain runs to 62 residues: Photosystem II reaction center protein Z (62 aa).

2 helical membrane-spanning segments follow: residues 8-28 (ALIS…VAYA) and 41-61 (WLGS…NFFV).

It belongs to the PsbZ family. In terms of assembly, PSII is composed of 1 copy each of membrane proteins PsbA, PsbB, PsbC, PsbD, PsbE, PsbF, PsbH, PsbI, PsbJ, PsbK, PsbL, PsbM, PsbT, PsbX, PsbY, PsbZ, Psb30/Ycf12, peripheral proteins PsbO, CyanoQ (PsbQ), PsbU, PsbV and a large number of cofactors. It forms dimeric complexes.

Its subcellular location is the cellular thylakoid membrane. In terms of biological role, may control the interaction of photosystem II (PSII) cores with the light-harvesting antenna, regulates electron flow through the 2 photosystem reaction centers. PSII is a light-driven water plastoquinone oxidoreductase, using light energy to abstract electrons from H(2)O, generating a proton gradient subsequently used for ATP formation. This Trichormus variabilis (strain ATCC 29413 / PCC 7937) (Anabaena variabilis) protein is Photosystem II reaction center protein Z.